Reading from the N-terminus, the 511-residue chain is Kinesin-like protein 8 (511 aa).

Residues 5 to 356 (NVRVIVRVRP…LRYSEAARRI (352 aa)) form the Kinesin motor domain. 107–114 (GQKGTGKT) lines the ATP pocket. Phosphoserine occurs at positions 278, 279, 284, and 456. The stretch at 373–489 (EGELDDILTT…KLVKSQLHDY (117 aa)) forms a coiled coil.

The protein belongs to the TRAFAC class myosin-kinesin ATPase superfamily. Kinesin family.

It is found in the cytoplasm. The protein resides in the cytoskeleton. The chain is Kinesin-like protein 8 (klp8) from Schizosaccharomyces pombe (strain 972 / ATCC 24843) (Fission yeast).